The primary structure comprises 201 residues: LexA repressor (201 aa).

Positions Arg28 to Lys48 form a DNA-binding region, H-T-H motif. Active-site for autocatalytic cleavage activity residues include Ser118 and Lys155.

It belongs to the peptidase S24 family. As to quaternary structure, homodimer.

It catalyses the reaction Hydrolysis of Ala-|-Gly bond in repressor LexA.. Represses a number of genes involved in the response to DNA damage (SOS response), including recA and lexA. In the presence of single-stranded DNA, RecA interacts with LexA causing an autocatalytic cleavage which disrupts the DNA-binding part of LexA, leading to derepression of the SOS regulon and eventually DNA repair. The protein is LexA repressor of Photorhabdus laumondii subsp. laumondii (strain DSM 15139 / CIP 105565 / TT01) (Photorhabdus luminescens subsp. laumondii).